Here is a 191-residue protein sequence, read N- to C-terminus: Crossover junction endodeoxyribonuclease RuvC (191 aa).

Catalysis depends on residues Asp7, Glu67, and Asp140. 3 residues coordinate Mg(2+): Asp7, Glu67, and Asp140.

This sequence belongs to the RuvC family. In terms of assembly, homodimer which binds Holliday junction (HJ) DNA. The HJ becomes 2-fold symmetrical on binding to RuvC with unstacked arms; it has a different conformation from HJ DNA in complex with RuvA. In the full resolvosome a probable DNA-RuvA(4)-RuvB(12)-RuvC(2) complex forms which resolves the HJ. The cofactor is Mg(2+).

Its subcellular location is the cytoplasm. It catalyses the reaction Endonucleolytic cleavage at a junction such as a reciprocal single-stranded crossover between two homologous DNA duplexes (Holliday junction).. Its function is as follows. The RuvA-RuvB-RuvC complex processes Holliday junction (HJ) DNA during genetic recombination and DNA repair. Endonuclease that resolves HJ intermediates. Cleaves cruciform DNA by making single-stranded nicks across the HJ at symmetrical positions within the homologous arms, yielding a 5'-phosphate and a 3'-hydroxyl group; requires a central core of homology in the junction. The consensus cleavage sequence is 5'-(A/T)TT(C/G)-3'. Cleavage occurs on the 3'-side of the TT dinucleotide at the point of strand exchange. HJ branch migration catalyzed by RuvA-RuvB allows RuvC to scan DNA until it finds its consensus sequence, where it cleaves and resolves the cruciform DNA. This Pelodictyon phaeoclathratiforme (strain DSM 5477 / BU-1) protein is Crossover junction endodeoxyribonuclease RuvC.